The chain runs to 145 residues: Antiholin-like protein LrgA (145 aa).

The next 4 membrane-spanning stretches (helical) occupy residues 10–30, 33–53, 72–92, and 96–116; these read PAHF…SKII, FMPI…VLLC, NIGL…GVIS, and FLII…TGYV.

This sequence belongs to the CidA/LrgA family. LrgA subfamily.

The protein resides in the cell membrane. In terms of biological role, inhibits the expression or activity of extracellular murein hydrolases by interacting, possibly with LrgB, with the holin-like proteins CidA and/or CidB. The LrgAB and CidAB proteins may affect the proton motive force of the membrane. May be involved in programmed cell death (PCD), possibly triggering PCD in response to antibiotics and environmental stresses. This chain is Antiholin-like protein LrgA, found in Staphylococcus aureus (strain JH1).